Consider the following 198-residue polypeptide: Thymidine kinase (198 aa).

ATP-binding positions include 15–22 (GCMFSGKT) and 87–90 (DEAQ). Glu-88 (proton acceptor) is an active-site residue. Cys-144, Cys-147, Cys-182, and His-185 together coordinate Zn(2+).

Belongs to the thymidine kinase family. In terms of assembly, homotetramer.

It localises to the cytoplasm. It carries out the reaction thymidine + ATP = dTMP + ADP + H(+). In Coprothermobacter proteolyticus (strain ATCC 35245 / DSM 5265 / OCM 4 / BT), this protein is Thymidine kinase.